The primary structure comprises 347 residues: SCA7 domain-containing protein SELMODRAFT_439258 (347 aa).

The N-terminal stretch at 1 to 13 (MCFFLSSLCPVVA) is a signal peptide. Positions 77-106 (RAEVGGTGPKVGRPRKLSVYNPREMSDGNP) are disordered. The SCA7 domain maps to 134–201 (QHLPFTVDDL…NNSRKSQQAD (68 aa)).

The sequence is that of SCA7 domain-containing protein SELMODRAFT_439258 from Selaginella moellendorffii (Spikemoss).